Consider the following 66-residue polypeptide: Small ribosomal subunit protein bS21 (66 aa).

This sequence belongs to the bacterial ribosomal protein bS21 family.

The protein is Small ribosomal subunit protein bS21 of Rickettsia typhi (strain ATCC VR-144 / Wilmington).